The following is a 149-amino-acid chain: Transthyretin (149 aa).

A signal peptide spans Met-1–Ala-22. The residue at position 32 (Cys-32) is a Sulfocysteine. Lys-37 provides a ligand contact to L-thyroxine. Glu-64 carries the 4-carboxyglutamate modification. 2 residues coordinate L-thyroxine: Glu-76 and Ser-139.

This sequence belongs to the transthyretin family. As to quaternary structure, homotetramer. Dimer of dimers. In the homotetramer, subunits assemble around a central channel that can accommodate two ligand molecules. Interacts with RBP4. Sulfonation of the reactive cysteine Cys-32 enhances the stability of the native conformation of TTR, avoiding misassembly of the protein leading to amyloid formation. In terms of tissue distribution, detected in liver.

The protein localises to the secreted. Its function is as follows. Thyroid hormone-binding protein. Probably transports thyroxine from the bloodstream to the brain. This is Transthyretin (TTR) from Macropus giganteus (Eastern gray kangaroo).